The sequence spans 224 residues: ATP-dependent dethiobiotin synthetase BioD (224 aa).

Residue Thr18 coordinates Mg(2+). Lys39 is a catalytic residue. Ser43 provides a ligand contact to substrate. The Mg(2+) site is built by Asp56 and Glu117. Residues Asp56, 117 to 120, and 177 to 178 each bind ATP; these read EGVG and NE.

The protein belongs to the dethiobiotin synthetase family. In terms of assembly, homodimer. Mg(2+) serves as cofactor.

Its subcellular location is the cytoplasm. The enzyme catalyses (7R,8S)-7,8-diammoniononanoate + CO2 + ATP = (4R,5S)-dethiobiotin + ADP + phosphate + 3 H(+). The protein operates within cofactor biosynthesis; biotin biosynthesis; biotin from 7,8-diaminononanoate: step 1/2. In terms of biological role, catalyzes a mechanistically unusual reaction, the ATP-dependent insertion of CO2 between the N7 and N8 nitrogen atoms of 7,8-diaminopelargonic acid (DAPA, also called 7,8-diammoniononanoate) to form a ureido ring. The polypeptide is ATP-dependent dethiobiotin synthetase BioD (Xanthomonas euvesicatoria pv. vesicatoria (strain 85-10) (Xanthomonas campestris pv. vesicatoria)).